A 62-amino-acid chain; its full sequence is Photosystem II reaction center protein Z (62 aa).

The next 2 membrane-spanning stretches (helical) occupy residues 8 to 28 (AVFA…VVFA) and 41 to 61 (FSGT…NSLI).

Belongs to the PsbZ family. PSII is composed of 1 copy each of membrane proteins PsbA, PsbB, PsbC, PsbD, PsbE, PsbF, PsbH, PsbI, PsbJ, PsbK, PsbL, PsbM, PsbT, PsbY, PsbZ, Psb30/Ycf12, at least 3 peripheral proteins of the oxygen-evolving complex and a large number of cofactors. It forms dimeric complexes.

It localises to the plastid. The protein resides in the chloroplast thylakoid membrane. In terms of biological role, may control the interaction of photosystem II (PSII) cores with the light-harvesting antenna, regulates electron flow through the 2 photosystem reaction centers. PSII is a light-driven water plastoquinone oxidoreductase, using light energy to abstract electrons from H(2)O, generating a proton gradient subsequently used for ATP formation. This chain is Photosystem II reaction center protein Z, found in Nymphaea alba (White water-lily).